The following is a 487-amino-acid chain: UDP-glucosyl transferase 73CC6 (487 aa).

The active-site Proton acceptor is the H17. Catalysis depends on D114, which acts as the Charge relay. Residues S282, W346, A347, H364, N368, S369, E372, and Y386 each coordinate UDP.

Belongs to the UDP-glycosyltransferase family. Mainly expressed in flowers and flower buds and, to a lesser extent, in leaves, stems and roots.

It functions in the pathway secondary metabolite biosynthesis; terpenoid biosynthesis. Component of the oleanane-type triterpene saponins (e.g. saponarioside A and saponarioside B) biosynthetic pathway, leading to the production of natural products with detergent properties used as traditional sources of soap. A glycosyltransferase that mediates the conversion of QA-di to QA-tri via the elongation of the C-3 sugar chain with a D-xylose. This chain is UDP-glucosyl transferase 73CC6, found in Saponaria officinalis (Common soapwort).